Consider the following 233-residue polypeptide: MSKLTKRQKMIAERVESQKLYTLEEAVSILNDLPPLKFKESVDIAINLGVDPRKSDQVVRGATNLPAGTGKTKRVAVFAQGAAADAAKEAGADVVGMDDLAEQVKAGNLDFDVVIAAPDAMRVVGQLGTILGPRGLMPNPKVGTVTPNVAEAVANAKAGQATYRVDKAGIIHTTIGQVGFTVEQIQQNVQALLADIRRAKPATSKGIYIKKITLSSTMGPGIALDPLPYRVAK.

Belongs to the universal ribosomal protein uL1 family. Part of the 50S ribosomal subunit.

Functionally, binds directly to 23S rRNA. The L1 stalk is quite mobile in the ribosome, and is involved in E site tRNA release. In terms of biological role, protein L1 is also a translational repressor protein, it controls the translation of the L11 operon by binding to its mRNA. The chain is Large ribosomal subunit protein uL1 from Psychrobacter sp. (strain PRwf-1).